We begin with the raw amino-acid sequence, 283 residues long: Arylamine N-acetyltransferase (283 aa).

The active-site Acyl-thioester intermediate is Cys-70. Active-site residues include His-110 and Asp-127.

This sequence belongs to the arylamine N-acetyltransferase family. In terms of assembly, homodimer and homotetramer.

It catalyses the reaction an arylamine + acetyl-CoA = an N-acetylarylamine + CoA. Its function is as follows. Catalyzes the transfer of the acetyl group from acetyl coenzyme A to the free amino group of arylamines and hydrazines. Is able to utilize not only acetyl-CoA, but also n-propionyl-CoA and acetoacetyl-CoA as acyl donors, although at a lower rate. As acetyl-CoA and propionyl-CoA are products of cholesterol catabolism and the nat gene is likely present in the same operon than genes involved in cholesterol degradation, this enzyme could have a role in the utilization and regulation of these CoA species. This Mycobacterium bovis (strain ATCC BAA-935 / AF2122/97) protein is Arylamine N-acetyltransferase (nat).